The sequence spans 87 residues: Large ribosomal subunit protein bL27 (87 aa).

This sequence belongs to the bacterial ribosomal protein bL27 family.

This is Large ribosomal subunit protein bL27 from Dechloromonas aromatica (strain RCB).